The primary structure comprises 31 residues: Photosystem II reaction center protein Psb30 (31 aa).

The chain crosses the membrane as a helical span at residues 5–25; it reads IQLTSLLLIVIAGPLVIALLF.

The protein belongs to the Psb30/Ycf12 family. In terms of assembly, PSII is composed of 1 copy each of membrane proteins PsbA, PsbB, PsbC, PsbD, PsbE, PsbF, PsbH, PsbI, PsbJ, PsbK, PsbL, PsbM, PsbT, PsbX, PsbY, PsbZ, Psb30/Ycf12, peripheral proteins of the oxygen-evolving complex and a large number of cofactors. It forms dimeric complexes.

Its subcellular location is the plastid. It is found in the chloroplast thylakoid membrane. Its function is as follows. A core subunit of photosystem II (PSII), probably helps stabilize the reaction center. The polypeptide is Photosystem II reaction center protein Psb30 (Phacus acuminatus).